Consider the following 382-residue polypeptide: Succinyl-diaminopimelate desuccinylase (382 aa).

Position 68 (His-68) interacts with Zn(2+). Residue Asp-70 is part of the active site. Asp-101 is a binding site for Zn(2+). The Proton acceptor role is filled by Glu-135. Positions 136, 164, and 350 each coordinate Zn(2+).

Belongs to the peptidase M20A family. DapE subfamily. Homodimer. The cofactor is Zn(2+). Requires Co(2+) as cofactor.

It catalyses the reaction N-succinyl-(2S,6S)-2,6-diaminopimelate + H2O = (2S,6S)-2,6-diaminopimelate + succinate. Its pathway is amino-acid biosynthesis; L-lysine biosynthesis via DAP pathway; LL-2,6-diaminopimelate from (S)-tetrahydrodipicolinate (succinylase route): step 3/3. In terms of biological role, catalyzes the hydrolysis of N-succinyl-L,L-diaminopimelic acid (SDAP), forming succinate and LL-2,6-diaminopimelate (DAP), an intermediate involved in the bacterial biosynthesis of lysine and meso-diaminopimelic acid, an essential component of bacterial cell walls. This chain is Succinyl-diaminopimelate desuccinylase, found in Acidithiobacillus ferrooxidans (strain ATCC 23270 / DSM 14882 / CIP 104768 / NCIMB 8455) (Ferrobacillus ferrooxidans (strain ATCC 23270)).